A 325-amino-acid polypeptide reads, in one-letter code: HTH-type transcriptional regulator VqsM (325 aa).

The HTH araC/xylS-type domain maps to 226–323 (QRIELFLDSI…GQSTTEFRNS (98 aa)). 2 consecutive DNA-binding regions (H-T-H motif) follow at residues 243–264 (VTTA…ADEG) and 290–313 (VDRI…RRWT).

Functionally, transcriptional regulator involved in both the repression (at least 99 genes, such as mexR and algU) and in the activation (at least 203 genes, such as mvfR, rsaL, vqsR and rpoS) of regulatory or putative regulatory proteins which are implicated in quorum sensing, virulence and multidrug resistance. The polypeptide is HTH-type transcriptional regulator VqsM (vqsM) (Pseudomonas aeruginosa (strain ATCC 15692 / DSM 22644 / CIP 104116 / JCM 14847 / LMG 12228 / 1C / PRS 101 / PAO1)).